The following is a 168-amino-acid chain: UPF0262 protein BBta_0898 (168 aa).

It belongs to the UPF0262 family.

This chain is UPF0262 protein BBta_0898, found in Bradyrhizobium sp. (strain BTAi1 / ATCC BAA-1182).